Reading from the N-terminus, the 440-residue chain is Syntrophin-1 (440 aa).

PH domains follow at residues 2–208 (AAVR…ACTT) and 227–340 (QVRH…IGGY). Positions 45-128 (TVRVVKYDGN…VVDLQVQYRR (84 aa)) constitute a PDZ domain. Positions 384–440 (SFETIRATGDDGGRFLWVDFGPPHGEQELDLLNSAKPVVFILHSFLATKVYRLGLYA) constitute an SU domain.

The protein belongs to the syntrophin family. In terms of assembly, component of the dystrophin glycoprotein complex (DGC). Interacts with dyb-1, dys-1 and snf-6 to form the DGC. Expressed in neurons and muscles; particularly strong expression in the body wall, head and vulval muscles, and in ventral nerve cord (at protein level).

The protein resides in the membrane. The protein localises to the cytoplasm. Its subcellular location is the cytoskeleton. Functionally, adapter protein that binds to and probably organizes the subcellular localization of a variety of membrane proteins. May link various receptors to the actin cytoskeleton and the dystrophin glycoprotein complex (DGC). May also act by slowing calcium channel activity via a direct or indirect mechanism potentially involving other second messengers. Plays an early role in the formation of the neuromuscular junction and is necessary for muscle maintenance. This Caenorhabditis elegans protein is Syntrophin-1.